Reading from the N-terminus, the 354-residue chain is tRNA N6-adenosine threonylcarbamoyltransferase (354 aa).

Positions 115 and 119 each coordinate Fe cation. Substrate-binding positions include 138 to 142, D171, G184, and N285; that span reads LVSGG. D313 contacts Fe cation.

This sequence belongs to the KAE1 / TsaD family. Requires Fe(2+) as cofactor.

The protein localises to the cytoplasm. It carries out the reaction L-threonylcarbamoyladenylate + adenosine(37) in tRNA = N(6)-L-threonylcarbamoyladenosine(37) in tRNA + AMP + H(+). Its function is as follows. Required for the formation of a threonylcarbamoyl group on adenosine at position 37 (t(6)A37) in tRNAs that read codons beginning with adenine. Is involved in the transfer of the threonylcarbamoyl moiety of threonylcarbamoyl-AMP (TC-AMP) to the N6 group of A37, together with TsaE and TsaB. TsaD likely plays a direct catalytic role in this reaction. The protein is tRNA N6-adenosine threonylcarbamoyltransferase of Albidiferax ferrireducens (strain ATCC BAA-621 / DSM 15236 / T118) (Rhodoferax ferrireducens).